Consider the following 223-residue polypeptide: Ribosome maturation factor RimM (223 aa).

Residues 142–223 form the PRC barrel domain; it reads ADEFYWVDLI…RIVVDWEADY (82 aa).

This sequence belongs to the RimM family. As to quaternary structure, binds ribosomal protein uS19.

It localises to the cytoplasm. Its function is as follows. An accessory protein needed during the final step in the assembly of 30S ribosomal subunit, possibly for assembly of the head region. Essential for efficient processing of 16S rRNA. May be needed both before and after RbfA during the maturation of 16S rRNA. It has affinity for free ribosomal 30S subunits but not for 70S ribosomes. The chain is Ribosome maturation factor RimM from Burkholderia multivorans (strain ATCC 17616 / 249).